A 90-amino-acid chain; its full sequence is MAKGQSLQDPFLNALRRERVPVSIYLVNGIKLQGQVESFDQFVILLKNTVSQMVYKHAISTVVPARPFNVAGHQNAQGGYGAQDDMPSGE.

Positions 9-68 (DPFLNALRRERVPVSIYLVNGIKLQGQVESFDQFVILLKNTVSQMVYKHAISTVVPARPF) constitute a Sm domain.

Belongs to the Hfq family. Homohexamer.

Functionally, RNA chaperone that binds small regulatory RNA (sRNAs) and mRNAs to facilitate mRNA translational regulation in response to envelope stress, environmental stress and changes in metabolite concentrations. Also binds with high specificity to tRNAs. The sequence is that of RNA-binding protein Hfq from Shewanella oneidensis (strain ATCC 700550 / JCM 31522 / CIP 106686 / LMG 19005 / NCIMB 14063 / MR-1).